The following is a 448-amino-acid chain: Tubulin alpha chain, nucleomorph (448 aa).

GTP-binding residues include Gln-11, Glu-71, Ser-140, Gly-144, Thr-145, Thr-179, Asn-206, and Asn-228. Glu-71 contributes to the Mg(2+) binding site. The active site involves Glu-254.

Belongs to the tubulin family. Dimer of alpha and beta chains. A typical microtubule is a hollow water-filled tube with an outer diameter of 25 nm and an inner diameter of 15 nM. Alpha-beta heterodimers associate head-to-tail to form protofilaments running lengthwise along the microtubule wall with the beta-tubulin subunit facing the microtubule plus end conferring a structural polarity. Microtubules usually have 13 protofilaments but different protofilament numbers can be found in some organisms and specialized cells. Mg(2+) is required as a cofactor.

The enzyme catalyses GTP + H2O = GDP + phosphate + H(+). Functionally, tubulin is the major constituent of microtubules, a cylinder consisting of laterally associated linear protofilaments composed of alpha- and beta-tubulin heterodimers. Microtubules grow by the addition of GTP-tubulin dimers to the microtubule end, where a stabilizing cap forms. Below the cap, tubulin dimers are in GDP-bound state, owing to GTPase activity of alpha-tubulin. The polypeptide is Tubulin alpha chain, nucleomorph (tubA) (Guillardia theta (Cryptophyte)).